A 354-amino-acid chain; its full sequence is Transcription termination factor 3, mitochondrial (354 aa).

The N-terminal 89 residues, Met-1–Asn-89, are a transit peptide targeting the mitochondrion.

The protein belongs to the mTERF family.

It is found in the mitochondrion. Functionally, binds promoter DNA and regulates initiation of transcription. Regulator of mitochondrial ribosome biogenesis and translation that is essential for development. Required for normal mitochondrial transcription and translation. Required for assembly of mitochondrial respiratory complexes and normal mitochondrial function. Maintains 16S rRNA levels and functions in mitochondrial ribosome assembly by regulating the biogenesis of the 39S ribosomal subunit. The protein is Transcription termination factor 3, mitochondrial of Drosophila melanogaster (Fruit fly).